The sequence spans 1033 residues: Calcium-transporting ATPase 12, plasma membrane-type (1033 aa).

M1 is subject to N-acetylmethionine. Residues 1 to 152 (MRDLKEYDYS…NTYHKPPPKG (152 aa)) lie on the Cytoplasmic side of the membrane. An interaction with calmodulin region spans residues 25 to 36 (QRRWRFAYAAIY). The residue at position 37 (S37) is a Phosphoserine. Residues 153-173 (LLFFVYEAFKDLTILILLVCA) traverse the membrane as a helical segment. Topologically, residues 174-191 (IFSLGFGIKEHGIKEGWY) are lumenal. A helical transmembrane segment spans residues 192–212 (EGGSIFVAVFLVIVVSALSNF). The Cytoplasmic portion of the chain corresponds to 213 to 341 (RQERQFDKLS…SERTPLQVRL (129 aa)). Residues 342-361 (DTLTSTIGKIGLTVAALVLV) traverse the membrane as a helical segment. Topologically, residues 362–397 (VLLVRYFTGNTEKEGKREYNGSKTPVDTVVNSVVRI) are lumenal. Residues 398-415 (VAAAVTIVVVAIPEGLPL) traverse the membrane as a helical segment. Residues 416 to 806 (AVTLTLAYSM…KWGRCVYNNI (391 aa)) lie on the Cytoplasmic side of the membrane. D453 (4-aspartylphosphate intermediate) is an active-site residue. D751 and D755 together coordinate Mg(2+). The helical transmembrane segment at 807-825 (QKFIQFQLTVNVAALVINF) threads the bilayer. Residues 826-836 (IAAISAGEVPL) lie on the Lumenal side of the membrane. Residues 837–857 (TAVQLLWVNLIMDTLGALALA) traverse the membrane as a helical segment. Topologically, residues 858-877 (TERPTNELLKRKPVGRTEAL) are cytoplasmic. Residues 878 to 900 (ITNVMWRNLLVQSLYQIAVLLIL) form a helical membrane-spanning segment. At 901–909 (QFKGMSIFS) the chain is on the lumenal side. The chain crosses the membrane as a helical span at residues 910 to 930 (VRKEVKDTLIFNTFVLCQVFN). The Cytoplasmic portion of the chain corresponds to 931–948 (EFNAREMEKKNVFKGLHR). The helical transmembrane segment at 949–970 (NRLFIGIIAITIVLQVIMVEFL) threads the bilayer. Topologically, residues 971-980 (KKFADTVRLN) are lumenal. A helical transmembrane segment spans residues 981–1002 (GWQWGTCIALASLSWPIGFFTK). At 1003–1006 (FIPV) the chain is on the cytoplasmic side.

Belongs to the cation transport ATPase (P-type) (TC 3.A.3) family. Type IIB subfamily.

It is found in the membrane. It catalyses the reaction Ca(2+)(in) + ATP + H2O = Ca(2+)(out) + ADP + phosphate + H(+). Activated by calmodulin. Functionally, this magnesium-dependent enzyme catalyzes the hydrolysis of ATP coupled with the translocation of calcium from the cytosol out of the cell or into organelles. The sequence is that of Calcium-transporting ATPase 12, plasma membrane-type (ACA12) from Arabidopsis thaliana (Mouse-ear cress).